We begin with the raw amino-acid sequence, 337 residues long: GTPase Obg (337 aa).

The Obg domain occupies 1-159 (MDFIDEVKLY…RNIVLKLKVL (159 aa)). Residues 160–329 (SDVGIIGMPN…LNEKVKTKEI (170 aa)) form the OBG-type G domain. Residues 166-173 (GMPNVGKS), 191-195 (FTTIR), 212-215 (DIPG), 279-282 (NKCD), and 310-312 (DDD) contribute to the GTP site. Serine 173 and threonine 193 together coordinate Mg(2+).

It belongs to the TRAFAC class OBG-HflX-like GTPase superfamily. OBG GTPase family. Monomer. Mg(2+) serves as cofactor.

It localises to the cytoplasm. An essential GTPase which binds GTP, GDP and possibly (p)ppGpp with moderate affinity, with high nucleotide exchange rates and a fairly low GTP hydrolysis rate. Plays a role in control of the cell cycle, stress response, ribosome biogenesis and in those bacteria that undergo differentiation, in morphogenesis control. The sequence is that of GTPase Obg from Wolbachia pipientis subsp. Culex pipiens (strain wPip).